Here is a 169-residue protein sequence, read N- to C-terminus: Der GTPase-activating protein YihI (169 aa).

Disordered regions lie at residues 1–100 (MKPS…AELE) and 144–169 (GLSYDDDEEEEEDEKQEDMMRLLRGN). Positions 10 to 19 (SKGHAKARRK) are enriched in basic residues. Positions 20-30 (TREELDQEARD) are enriched in basic and acidic residues. The segment covering 31–40 (RKRQKKRRGH) has biased composition (basic residues). Residues 49 to 58 (GNTSSGSKGQ) are compositionally biased toward polar residues. A compositionally biased stretch (acidic residues) spans 147–159 (YDDDEEEEEDEKQ). The segment covering 160 to 169 (EDMMRLLRGN) has biased composition (basic and acidic residues).

This sequence belongs to the YihI family. In terms of assembly, interacts with Der.

In terms of biological role, a GTPase-activating protein (GAP) that modifies Der/EngA GTPase function. May play a role in ribosome biogenesis. This chain is Der GTPase-activating protein YihI, found in Escherichia coli (strain SMS-3-5 / SECEC).